The following is an 812-amino-acid chain: Eukaryotic translation initiation factor 3 subunit C (812 aa).

Residues 1 to 110 (MSRFFSSNYE…EESDEEDGKK (110 aa)) form a disordered region. Composition is skewed to acidic residues over residues 18-30 (SEED…EEDL) and 38-64 (SELD…DSDD). A phosphoserine mark is found at S98, S99, and S103. A PCI domain is found at 608–783 (YHQHINLDLI…TIFVVEKGDE (176 aa)).

The protein belongs to the eIF-3 subunit C family. In terms of assembly, the eukaryotic translation initiation factor 3 (eIF-3) core complex is composed of TIF32, PRT1, NIP1, TIF34 and TIF35. A subcomplex of TIF32, NIP1 and PRT1 mediates the interaction with eIF-1, TIF5/eIF-5 and HCR1. The factors eIF-1, eIF-2, eIF-3, TIF5/eIF-5 and methionyl-tRNAi form a multifactor complex (MFC) that may bind to the 40S ribosome. TIF32, NIP1 and TIF5/eIF-5 comprise a minimal 40S-ribosome-binding unit. NIP1 interacts with TIF5/eIF-5 and SUI1.

It is found in the cytoplasm. Functionally, component of the eukaryotic translation initiation factor 3 (eIF-3) complex, which is involved in protein synthesis of a specialized repertoire of mRNAs and, together with other initiation factors, stimulates binding of mRNA and methionyl-tRNAi to the 40S ribosome. The eIF-3 complex specifically targets and initiates translation of a subset of mRNAs involved in cell proliferation. The protein is Eukaryotic translation initiation factor 3 subunit C of Saccharomyces cerevisiae (strain ATCC 204508 / S288c) (Baker's yeast).